Reading from the N-terminus, the 110-residue chain is uncharacterized protein (110 aa).

2 consecutive transmembrane segments (helical) span residues 6–26 and 38–58; these read VSLYILCFALGLRNTFLIYNV and TSGPIGDTIFLIYGIIIIIGP.

It is found in the membrane. This is an uncharacterized protein from Saccharomyces cerevisiae (strain ATCC 204508 / S288c) (Baker's yeast).